A 315-amino-acid polypeptide reads, in one-letter code: MVDFQLNNFSFDPVVSLGLAAFLFLLIALPISFWSVAGGSDSSKARFLVATSNLFLTSQLILRWWQSGHFPISNLYESLCFLTWGCTLAQLFVERAWRSPIVSAVATPVSLLSIGFASFVLPENLQSSAPLVPALRSSWLVMHVSVIMCSYAALLIGSILSFGVFLVDGKKQFNIRNSSFGSGSFRQSSELYLDERNENLNSIQPIEFTNAEQLDSLSYRSITAGFLLLTVGLISGAVWANEAWGSWWSWDPKETWALICWLVYAAYLHTRLTRGWQGKKPAILAIAGFFVIIVCYIGVNLLGVGLHSYGWFFDT.

Helical transmembrane passes span 14–34 (VVSL…ISFW), 72–92 (ISNL…AQLF), 101–121 (IVSA…SFVL), 146–166 (VIMC…GVFL), 221–241 (SITA…VWAN), 255–272 (TWAL…HTRL), and 282–302 (AILA…VNLL).

The protein belongs to the CcmF/CycK/Ccl1/NrfE/CcsA family. May interact with ccs1.

It localises to the cellular thylakoid membrane. In terms of biological role, required during biogenesis of c-type cytochromes (cytochrome c6 and cytochrome f) at the step of heme attachment. The chain is Cytochrome c biogenesis protein CcsA from Prochlorococcus marinus (strain NATL1A).